The following is a 211-amino-acid chain: Ras-related protein Rab-38 (211 aa).

Residues Gly-19, Val-20, Gly-21, Lys-22, Thr-23, Ser-24, Ser-35, Ser-36, Tyr-38, and Thr-41 each contribute to the GTP site. Thr-23 is a binding site for Mg(2+). The Switch 1 signature appears at 32–46 (QNFSSHYRATIGVDF). Mg(2+) contacts are provided by Thr-41 and Asp-65. Gly-68, Lys-128, Asp-130, Ala-160, and Lys-161 together coordinate GTP. Residues 68–81 (GQERFGNMTRVYYR) carry the Switch 2 motif. Cys-205 carries S-palmitoyl cysteine lipidation. Cys-208 is lipidated: S-geranylgeranyl cysteine.

It belongs to the small GTPase superfamily. Rab family. As to quaternary structure, interacts with ANKRD27. Requires Mg(2+) as cofactor. In terms of processing, although at least one in vitro system can process and methylate the prenylated C-terminal, in an in vitro system that normally express Rab-38 and in vivo the prenylated C-terminal is not proteolytically processed and not methylated. In terms of tissue distribution, expressed in melanocytes.

It is found in the cell membrane. It localises to the melanosome. The protein localises to the cytoplasmic vesicle. The protein resides in the phagosome. Its subcellular location is the phagosome membrane. It is found in the melanosome membrane. The catalysed reaction is GTP + H2O = GDP + phosphate + H(+). Regulated by guanine nucleotide exchange factors (GEFs) including the BLOC-3 complex composed of HPS1 and HPS4 which promote the exchange of bound GDP for free GTP. Regulated by GTPase activating proteins (GAPs) including SGSM2 which increase the GTP hydrolysis activity. Inhibited by GDP dissociation inhibitors (GDIs). The small GTPases Rab are key regulators of intracellular membrane trafficking, from the formation of transport vesicles to their fusion with membranes. Rabs cycle between an inactive GDP-bound form and an active GTP-bound form that is able to recruit to membranes different sets of downstream effectors directly responsible for vesicle formation, movement, tethering and fusion. RAB38 may be involved in melanosomal transport and docking. Involved in the proper sorting of TYRP1. Involved in peripheral melanosomal distribution of TYRP1 in melanocytes; the function, which probably is implicating vesicle-trafficking, includes cooperation with ANKRD27 and VAMP7. Plays a role in the maturation of phagosomes that engulf pathogens, such as S.aureus and M.tuberculosis. Plays an important role in the control of melanin production and melanosome biogenesis. In concert with RAB32, regulates the proper trafficking of melanogenic enzymes TYR, TYRP1 and DCT/TYRP2 to melanosomes in melanocytes. This chain is Ras-related protein Rab-38, found in Homo sapiens (Human).